A 126-amino-acid chain; its full sequence is Large ribosomal subunit protein uL22 (126 aa).

It belongs to the universal ribosomal protein uL22 family. In terms of assembly, part of the 50S ribosomal subunit.

This protein binds specifically to 23S rRNA; its binding is stimulated by other ribosomal proteins, e.g. L4, L17, and L20. It is important during the early stages of 50S assembly. It makes multiple contacts with different domains of the 23S rRNA in the assembled 50S subunit and ribosome. Functionally, the globular domain of the protein is located near the polypeptide exit tunnel on the outside of the subunit, while an extended beta-hairpin is found that lines the wall of the exit tunnel in the center of the 70S ribosome. In Prochlorococcus marinus (strain NATL2A), this protein is Large ribosomal subunit protein uL22.